The primary structure comprises 503 residues: V-type proton ATPase subunit B (503 aa).

Position 378 (arginine 378) interacts with ATP. Serine 491, serine 492, serine 502, and serine 503 each carry phosphoserine.

This sequence belongs to the ATPase alpha/beta chains family. In terms of assembly, V-ATPase is a heteromultimeric enzyme composed of a peripheral catalytic V1 complex (components A to H) attached to an integral membrane V0 proton pore complex (components: a, c, c', c'', d, e, f and VOA1). Interacts with rav1.

It localises to the vacuole membrane. Non-catalytic subunit of the V1 complex of vacuolar(H+)-ATPase (V-ATPase), a multisubunit enzyme composed of a peripheral complex (V1) that hydrolyzes ATP and a membrane integral complex (V0) that translocates protons. V-ATPase is responsible for acidifying and maintaining the pH of intracellular compartments. The protein is V-type proton ATPase subunit B of Schizosaccharomyces pombe (strain 972 / ATCC 24843) (Fission yeast).